Reading from the N-terminus, the 752-residue chain is Microtubule-associated protein tau (752 aa).

Residues 1 to 567 form a disordered region; that stretch reads MAEPRQEFDT…PVPMPDLKNV (567 aa). A2 bears the N-acetylalanine mark. Y18 bears the Phosphotyrosine mark. K33 is covalently cross-linked (Glycyl lysine isopeptide (Lys-Gly) (interchain with G-Cter in ubiquitin)). Residues S35 and S50 each carry the phosphoserine modification. A compositionally biased stretch (polar residues) spans 50-60; that stretch reads SETSDAKSTPT. Residues T58, T60, and T100 each carry the phosphothreonine modification. Residues 142-151 are compositionally biased toward polar residues; that stretch reads SDWTHQQVPS. The segment covering 173-182 has biased composition (basic and acidic residues); sequence RPEDVERSHP. Phosphoserine occurs at positions 191 and 204. A compositionally biased stretch (basic and acidic residues) spans 192-204; sequence PQKEAWGKDRLGS. Acidic residues predominate over residues 205 to 218; that stretch reads EEEVDEDITMDESS. Residues 219–229 are compositionally biased toward low complexity; it reads QESPPSQASLA. A compositionally biased stretch (polar residues) spans 233-252; sequence ATPQARSVSASGVSGETTSI. Basic and acidic residues-rich tracts occupy residues 289-313 and 374-385; these read EEGH…KEQD and SKDRTGNDEKKA. Composition is skewed to polar residues over residues 387–400 and 432–446; these read TSTP…SNRP and KYVS…SPGT. Phosphothreonine is present on T464. Residue R466 is modified to Omega-N-methylarginine. N6,N6-dimethyllysine; alternate is present on K474. K474 is subject to N6-acetyllysine; alternate. 3 positions are modified to phosphothreonine: T480, T486, and T487. The residue at position 489 (S489) is a Phosphoserine. At T492 the chain carries Phosphothreonine. Residues S496, S502, and S506 each carry the phosphoserine modification. The segment covering 498 to 525 has biased composition (low complexity); that stretch reads EPPKSGERSGYSSPGSPGTPGSRSRTPS. Y508 is modified (phosphotyrosine). A phosphoserine mark is found at S509 and S510. S513 is subject to Phosphoserine; by CK1, PDPK1 and TTBK1. 2 positions are modified to phosphothreonine: T516 and T523. S525 is subject to Phosphoserine. Phosphothreonine is present on T528. K536 bears the N6-acetyllysine mark. T542 is modified (phosphothreonine). S546 and S548 each carry phosphoserine. 4 Tau/MAP repeats span residues 555 to 585, 586 to 616, 617 to 647, and 648 to 679; these read QTAP…GGGK, VQII…GGGS, VHIV…GGGQ, and VEVK…GGGN. A Glycyl lysine isopeptide (Lys-Gly) (interchain with G-Cter in ubiquitin) cross-link involves residue K565. The residue at position 570 (K570) is an N6-acetyllysine; alternate. At K570 the chain carries N6-methyllysine; alternate. K570 participates in a covalent cross-link: Glycyl lysine isopeptide (Lys-Gly) (interchain with G-Cter in ubiquitin); alternate. Residue S573 is modified to Phosphoserine. A Glycyl lysine isopeptide (Lys-Gly) (interchain with G-Cter in ubiquitin) cross-link involves residue K578. The residue at position 592 (K592) is an N6-acetyllysine; alternate. A Glycyl lysine isopeptide (Lys-Gly) (interchain with G-Cter in ubiquitin); alternate cross-link involves residue K592. S596 and S600 each carry phosphoserine. Residue K601 is modified to N6-acetyllysine. A disulfide bridge links C602 with C633. S604 is modified (phosphoserine). K609 carries the N6-acetyllysine; alternate modification. A Glycyl lysine isopeptide (Lys-Gly) (interchain with G-Cter in ubiquitin); alternate cross-link involves residue K609. S616 is modified (phosphoserine). K622 bears the N6,N6-dimethyllysine; alternate mark. 3 positions are modified to N6-acetyllysine; alternate: K622, K628, and K632. Residues K622, K628, and K632 each participate in a glycyl lysine isopeptide (Lys-Gly) (interchain with G-Cter in ubiquitin); alternate cross-link. S635 is subject to Phosphoserine. 3 positions are modified to N6-acetyllysine; alternate: K642, K654, and K658. Glycyl lysine isopeptide (Lys-Gly) (interchain with G-Cter in ubiquitin); alternate cross-links involve residues K642, K654, and K658. R660 is modified (omega-N-methylarginine). A Phosphoserine modification is found at S663. Residue K664 forms a Glycyl lysine isopeptide (Lys-Gly) (interchain with G-Cter in ubiquitin) linkage. S667 bears the Phosphoserine mark. K680 is modified (N6-acetyllysine; alternate). Residue K680 forms a Glycyl lysine isopeptide (Lys-Gly) (interchain with G-Cter in ubiquitin); alternate linkage. K686 participates in a covalent cross-link: Glycyl lysine isopeptide (Lys-Gly) (interchain with G-Cter in ubiquitin). N6-acetyllysine; alternate is present on K696. K696 is covalently cross-linked (Glycyl lysine isopeptide (Lys-Gly) (interchain with G-Cter in ubiquitin); alternate). A Phosphotyrosine modification is found at Y705. Phosphoserine; by CK1 and PDPK1 is present on S707. Phosphoserine is present on S711. At T714 the chain carries Phosphothreonine. S715 is modified (phosphoserine; by CK1 and PDPK1). S720, S727, and S733 each carry phosphoserine. T738 carries the post-translational modification Phosphothreonine.

Interacts with MARK1, MARK2, MARK3 and MARK4. Interacts with SQSTM1 when polyubiquitinated. Interacts with PSMC2 through SQSTM1. Interacts with FKBP4. Binds to CSNK1D. Interacts with SGK1. Interacts with EPM2A; the interaction dephosphorylates MAPT at Ser-388. Interacts with PIN1. Interacts with LRRK2. Interacts with LRP1, leading to endocytosis; this interaction is reduced in the presence of LRPAP1/RAP. In terms of processing, polyubiquitinated. Requires functional TRAF6 and may provoke SQSTM1-dependent degradation by the proteasome. Phosphorylated at various serine and threonine residues in S-P or T-P motifs by proline-directed protein kinases (PDPK1, CDK1, CDK5, GSK3, MAPK) (a few sites per protein in interphase, more in mitosis), and at serine residues in K-X-G-S motifs by MAP/microtubule affinity-regulating kinase (MARK1, MARK2, MARK3, MARK4), causing detachment from microtubules, and their disassembly. Fetal Tau is much more phosphorylated than adult Tau. Phosphorylation at Ser-573 by BRSK1 and BRSK2 in neurons affects ability to bind microtubules and plays a role in neuron polarization. Phosphorylated by PHK. Dephosphorylation at several serine and threonine residues by the serine/threonine phosphatase PPP5C. Phosphorylation at Ser-204 by SGK1 mediates microtubule depolymerization and neurite formation in hippocampal neurons. As to expression, expressed in neurons. The larger forms (isoform tau-A and isoform tau-B) are preferentially expressed in the peripheral nervous system while the other are expressed in the central nervous system. Low amounts of the larger forms are also found in limited areas of the CNS.

It is found in the cytoplasm. The protein resides in the cytosol. It localises to the cell membrane. The protein localises to the cytoskeleton. Its subcellular location is the cell projection. It is found in the axon. The protein resides in the dendrite. It localises to the secreted. Promotes microtubule assembly and stability, and might be involved in the establishment and maintenance of neuronal polarity. The C-terminus binds axonal microtubules while the N-terminus binds neural plasma membrane components, suggesting that tau functions as a linker protein between both. Axonal polarity is predetermined by tau localization (in the neuronal cell) in the domain of the cell body defined by the centrosome. The short isoforms allow plasticity of the cytoskeleton whereas the longer isoforms may preferentially play a role in its stabilization. In Rattus norvegicus (Rat), this protein is Microtubule-associated protein tau.